The following is a 313-amino-acid chain: Ornithine carbamoyltransferase (313 aa).

Carbamoyl phosphate contacts are provided by residues 57-60, R108, and 135-138; these read STRT and HPTQ. L-ornithine-binding positions include N167, D231, and 235–236; that span reads SM. Residues 272–273 and R300 contribute to the carbamoyl phosphate site; that span reads CL.

It belongs to the aspartate/ornithine carbamoyltransferase superfamily. OTCase family.

Its subcellular location is the cytoplasm. It carries out the reaction carbamoyl phosphate + L-ornithine = L-citrulline + phosphate + H(+). The protein operates within amino-acid biosynthesis; L-arginine biosynthesis; L-arginine from L-ornithine and carbamoyl phosphate: step 1/3. Its function is as follows. Reversibly catalyzes the transfer of the carbamoyl group from carbamoyl phosphate (CP) to the N(epsilon) atom of ornithine (ORN) to produce L-citrulline. The polypeptide is Ornithine carbamoyltransferase (Thermotoga maritima (strain ATCC 43589 / DSM 3109 / JCM 10099 / NBRC 100826 / MSB8)).